The following is a 400-amino-acid chain: Tryptophan--tRNA ligase (400 aa).

The 'HIGH' region signature appears at 12-20 (PTGALHLGH). Residues 173 to 241 (REPGFEQKAL…RLFGYLEGAR (69 aa)) form an insert region. Residues 265-269 (KMSKS) carry the 'KMSKS' region motif. Position 268 (lysine 268) interacts with ATP. Positions 280 to 305 (KASVEKKVRTMPTDPARVRRTDPGDP) are disordered. The segment covering 295–304 (ARVRRTDPGD) has biased composition (basic and acidic residues).

Belongs to the class-I aminoacyl-tRNA synthetase family. As to quaternary structure, homodimer.

It is found in the cytoplasm. The catalysed reaction is tRNA(Trp) + L-tryptophan + ATP = L-tryptophyl-tRNA(Trp) + AMP + diphosphate + H(+). The protein is Tryptophan--tRNA ligase (trpS) of Ralstonia nicotianae (strain ATCC BAA-1114 / GMI1000) (Ralstonia solanacearum).